The sequence spans 392 residues: Putative nickel insertion protein (392 aa).

It belongs to the LarC family.

The protein is Putative nickel insertion protein of Methanothrix thermoacetophila (strain DSM 6194 / JCM 14653 / NBRC 101360 / PT) (Methanosaeta thermophila).